The primary structure comprises 155 residues: Ribonuclease H (155 aa).

The region spanning 4–146 is the RNase H type-1 domain; the sequence is NIDVVEIYTD…CDRLATEQIK (143 aa). 4 residues coordinate Mg(2+): D13, E51, D73, and D138.

Belongs to the RNase H family. In terms of assembly, monomer. It depends on Mg(2+) as a cofactor.

The protein resides in the cytoplasm. The catalysed reaction is Endonucleolytic cleavage to 5'-phosphomonoester.. Its function is as follows. Endonuclease that specifically degrades the RNA of RNA-DNA hybrids. The polypeptide is Ribonuclease H (Thermoanaerobacter pseudethanolicus (strain ATCC 33223 / 39E) (Clostridium thermohydrosulfuricum)).